We begin with the raw amino-acid sequence, 302 residues long: Bifunctional protein FolD 2 (302 aa).

NADP(+)-binding positions include 170–172 (GRS), serine 195, and isoleucine 236.

The protein belongs to the tetrahydrofolate dehydrogenase/cyclohydrolase family. In terms of assembly, homodimer.

The enzyme catalyses (6R)-5,10-methylene-5,6,7,8-tetrahydrofolate + NADP(+) = (6R)-5,10-methenyltetrahydrofolate + NADPH. The catalysed reaction is (6R)-5,10-methenyltetrahydrofolate + H2O = (6R)-10-formyltetrahydrofolate + H(+). Its pathway is one-carbon metabolism; tetrahydrofolate interconversion. Functionally, catalyzes the oxidation of 5,10-methylenetetrahydrofolate to 5,10-methenyltetrahydrofolate and then the hydrolysis of 5,10-methenyltetrahydrofolate to 10-formyltetrahydrofolate. The chain is Bifunctional protein FolD 2 from Paracoccus denitrificans (strain Pd 1222).